Here is a 709-residue protein sequence, read N- to C-terminus: Cell adhesion molecule CEACAM3 (709 aa).

The signal sequence occupies residues 1–34 (MELSSVLPCKRCTPWRGLLLTASLLTCWLLPTTA). Ig-like V-type domains are found at residues 35–142 (QVSI…HVYF), 155–262 (QLSI…QVDT), 275–382 (QLTV…QVNT), 393–500 (LLTI…SVHT), and 509–616 (QLVI…HIYK). Residues Asn-73, Asn-86, Asn-103, Asn-110, Asn-133, Asn-207, Asn-224, Asn-231, Asn-327, Asn-344, Asn-351, Asn-381, Asn-462, Asn-561, Asn-578, and Asn-585 are each glycosylated (N-linked (GlcNAc...) asparagine). The region spanning 631 to 695 (RVKSSVVLTC…YRCEVSNPVS (65 aa)) is the Ig-like C2-type domain.

It belongs to the immunoglobulin superfamily. CEA family. As to expression, expression detected only in placenta.

Its function is as follows. Possibly involved in cell adhesion. This Rattus norvegicus (Rat) protein is Cell adhesion molecule CEACAM3.